A 142-amino-acid polypeptide reads, in one-letter code: Large ribosomal subunit protein uL13 (142 aa).

Belongs to the universal ribosomal protein uL13 family. As to quaternary structure, part of the 50S ribosomal subunit.

This protein is one of the early assembly proteins of the 50S ribosomal subunit, although it is not seen to bind rRNA by itself. It is important during the early stages of 50S assembly. This chain is Large ribosomal subunit protein uL13, found in Vibrio parahaemolyticus serotype O3:K6 (strain RIMD 2210633).